Reading from the N-terminus, the 113-residue chain is U11-theraphotoxin-Hhn1l (113 aa).

The N-terminal stretch at 1–21 is a signal peptide; the sequence is MNTGRVTFLVVFLVAVSLGPA. Residues 22–74 constitute a propeptide that is removed on maturation; the sequence is DKEENPMEMQEKTQQGKNYLNFGENLVVPKLEELKAKLVEKESKKSKNSRQKR. 2 disulfide bridges follow: cysteine 82/cysteine 95 and cysteine 89/cysteine 110.

This sequence belongs to the neurotoxin 14 (magi-1) family. 01 (HNTX-16) subfamily. In terms of tissue distribution, expressed by the venom gland.

It is found in the secreted. Functionally, probable ion channel inhibitor. This is U11-theraphotoxin-Hhn1l from Cyriopagopus hainanus (Chinese bird spider).